Reading from the N-terminus, the 354-residue chain is Glucose 1-dehydrogenase (354 aa).

The tract at residues 1–27 (MKVIGVTRDDDGPQLLERERPSPDPGE) is disordered. The segment covering 7 to 22 (TRDDDGPQLLERERPS) has biased composition (basic and acidic residues). D38 is a Zn(2+) binding site. Residue T40 coordinates substrate. 2 residues coordinate Zn(2+): H63 and E64. Residues 91–110 (PNGETNEYFRRGEPDMAPDG) are disordered. The substrate site is built by E114 and E150. E150 is a binding site for Zn(2+). NADP(+) is bound by residues 181–184 (NGSL), 204–205 (RR), 269–271 (LGI), and 298–300 (TVN). A substrate-binding site is contributed by N300.

This sequence belongs to the zinc-containing alcohol dehydrogenase family. Glucose 1-dehydrogenase subfamily. It depends on Zn(2+) as a cofactor.

It carries out the reaction D-glucose + NAD(+) = D-glucono-1,5-lactone + NADH + H(+). It catalyses the reaction D-glucose + NADP(+) = D-glucono-1,5-lactone + NADPH + H(+). In terms of biological role, catalyzes the NAD(P)(+)-dependent oxidation of D-glucose to D-gluconate via gluconolactone. Can utilize both NAD(+) and NADP(+) as electron acceptor. Is involved in the degradation of glucose through a modified Entner-Doudoroff pathway. This chain is Glucose 1-dehydrogenase, found in Haloarcula marismortui (strain ATCC 43049 / DSM 3752 / JCM 8966 / VKM B-1809) (Halobacterium marismortui).